A 671-amino-acid polypeptide reads, in one-letter code: UvrABC system protein B (671 aa).

A Helicase ATP-binding domain is found at 26 to 183 (EGLENGLAHQ…RRLSELQYSR (158 aa)). 39 to 46 (GVTGSGKT) is a binding site for ATP. The Beta-hairpin signature appears at 92–115 (YYDYYQPEAYVPSSDTFIEKDASV). In terms of domain architecture, Helicase C-terminal spans 431-597 (QVDDLLSEIR…GLNKKIGDIL (167 aa)). One can recognise a UVR domain in the interval 631–666 (DQKIRELEAKMYTYAQNLEFEQAAELRDQVHQLRQQ).

It belongs to the UvrB family. In terms of assembly, forms a heterotetramer with UvrA during the search for lesions. Interacts with UvrC in an incision complex.

It is found in the cytoplasm. Its function is as follows. The UvrABC repair system catalyzes the recognition and processing of DNA lesions. A damage recognition complex composed of 2 UvrA and 2 UvrB subunits scans DNA for abnormalities. Upon binding of the UvrA(2)B(2) complex to a putative damaged site, the DNA wraps around one UvrB monomer. DNA wrap is dependent on ATP binding by UvrB and probably causes local melting of the DNA helix, facilitating insertion of UvrB beta-hairpin between the DNA strands. Then UvrB probes one DNA strand for the presence of a lesion. If a lesion is found the UvrA subunits dissociate and the UvrB-DNA preincision complex is formed. This complex is subsequently bound by UvrC and the second UvrB is released. If no lesion is found, the DNA wraps around the other UvrB subunit that will check the other stand for damage. In Yersinia pseudotuberculosis serotype IB (strain PB1/+), this protein is UvrABC system protein B.